The chain runs to 203 residues: Guanylate kinase (203 aa).

A Guanylate kinase-like domain is found at 3–181 (GTLYIVAAPS…AVSEMCAIFT (179 aa)). Residue 10–17 (APSGAGKS) coordinates ATP.

Belongs to the guanylate kinase family.

Its subcellular location is the cytoplasm. The catalysed reaction is GMP + ATP = GDP + ADP. Essential for recycling GMP and indirectly, cGMP. The protein is Guanylate kinase of Xanthomonas axonopodis pv. citri (strain 306).